The sequence spans 264 residues: Thymidylate synthase (264 aa).

Arginine 21 is a binding site for dUMP. Histidine 51 is a binding site for (6R)-5,10-methylene-5,6,7,8-tetrahydrofolate. 126–127 lines the dUMP pocket; sequence RR. Cysteine 146 serves as the catalytic Nucleophile. Residues 166 to 169, asparagine 177, and 207 to 209 each bind dUMP; these read RSGD and HLY. Aspartate 169 provides a ligand contact to (6R)-5,10-methylene-5,6,7,8-tetrahydrofolate. Alanine 263 contacts (6R)-5,10-methylene-5,6,7,8-tetrahydrofolate.

Belongs to the thymidylate synthase family. Bacterial-type ThyA subfamily. As to quaternary structure, homodimer.

It localises to the cytoplasm. It carries out the reaction dUMP + (6R)-5,10-methylene-5,6,7,8-tetrahydrofolate = 7,8-dihydrofolate + dTMP. Its pathway is pyrimidine metabolism; dTTP biosynthesis. Its function is as follows. Catalyzes the reductive methylation of 2'-deoxyuridine-5'-monophosphate (dUMP) to 2'-deoxythymidine-5'-monophosphate (dTMP) while utilizing 5,10-methylenetetrahydrofolate (mTHF) as the methyl donor and reductant in the reaction, yielding dihydrofolate (DHF) as a by-product. This enzymatic reaction provides an intracellular de novo source of dTMP, an essential precursor for DNA biosynthesis. This Xanthomonas axonopodis pv. citri (strain 306) protein is Thymidylate synthase.